Here is a 355-residue protein sequence, read N- to C-terminus: Aminopeptidase N (355 aa).

Residues glutamate 156 and 290-294 (GAMEN) contribute to the substrate site. A Zn(2+)-binding site is contributed by histidine 326. Glutamate 327 (proton acceptor) is an active-site residue. Zn(2+)-binding residues include histidine 330 and glutamate 349. Glutamate 349 contacts substrate.

It belongs to the peptidase M1 family. Zn(2+) is required as a cofactor.

It localises to the cytoplasm. The catalysed reaction is Release of an N-terminal amino acid, Xaa-|-Yaa- from a peptide, amide or arylamide. Xaa is preferably Ala, but may be most amino acids including Pro (slow action). When a terminal hydrophobic residue is followed by a prolyl residue, the two may be released as an intact Xaa-Pro dipeptide.. Aminopeptidase N is involved in the degradation of intracellular peptides generated by protein breakdown during normal growth as well as in response to nutrient starvation. The sequence is that of Aminopeptidase N (pepN) from Acetobacter pasteurianus (Acetobacter turbidans).